A 224-amino-acid chain; its full sequence is Protein GrpE (224 aa).

Residues 1 to 72 are disordered; sequence MEKERDVAQE…KAKEEQNEEL (72 aa). Positions 10-19 are enriched in polar residues; it reads EQATYEQESP. Positions 20–67 are enriched in basic and acidic residues; sequence NAERQEELKENEHQEKNAPEEQEKVREENGRQDAQKDEIGDPEKAKEE.

The protein belongs to the GrpE family. In terms of assembly, homodimer.

Its subcellular location is the cytoplasm. Participates actively in the response to hyperosmotic and heat shock by preventing the aggregation of stress-denatured proteins, in association with DnaK and GrpE. It is the nucleotide exchange factor for DnaK and may function as a thermosensor. Unfolded proteins bind initially to DnaJ; upon interaction with the DnaJ-bound protein, DnaK hydrolyzes its bound ATP, resulting in the formation of a stable complex. GrpE releases ADP from DnaK; ATP binding to DnaK triggers the release of the substrate protein, thus completing the reaction cycle. Several rounds of ATP-dependent interactions between DnaJ, DnaK and GrpE are required for fully efficient folding. The sequence is that of Protein GrpE from Parageobacillus thermoglucosidasius (Geobacillus thermoglucosidasius).